A 127-amino-acid polypeptide reads, in one-letter code: Large ribosomal subunit protein bL12 (127 aa).

This sequence belongs to the bacterial ribosomal protein bL12 family. As to quaternary structure, homodimer. Part of the ribosomal stalk of the 50S ribosomal subunit. Forms a multimeric L10(L12)X complex, where L10 forms an elongated spine to which 2 to 4 L12 dimers bind in a sequential fashion. Binds GTP-bound translation factors.

In terms of biological role, forms part of the ribosomal stalk which helps the ribosome interact with GTP-bound translation factors. Is thus essential for accurate translation. The polypeptide is Large ribosomal subunit protein bL12 (Caulobacter vibrioides (strain ATCC 19089 / CIP 103742 / CB 15) (Caulobacter crescentus)).